Consider the following 432-residue polypeptide: Amino-acid acetyltransferase (432 aa).

Positions 286-425 (EVVREASIED…ASLYNYQRNS (140 aa)) constitute an N-acetyltransferase domain.

The protein belongs to the acetyltransferase family. ArgA subfamily.

The protein resides in the cytoplasm. It catalyses the reaction L-glutamate + acetyl-CoA = N-acetyl-L-glutamate + CoA + H(+). It functions in the pathway amino-acid biosynthesis; L-arginine biosynthesis; N(2)-acetyl-L-ornithine from L-glutamate: step 1/4. This Pseudomonas putida (strain GB-1) protein is Amino-acid acetyltransferase.